Consider the following 364-residue polypeptide: Leucine-rich repeat-containing protein 19 (364 aa).

Residues 1–20 form the signal peptide; it reads MKVTRFMFWLFSMLLPSVKS. The Extracellular segment spans residues 21–264; the sequence is QASETEVPCN…SEHEPLGKSW (244 aa). N-linked (GlcNAc...) asparagine glycosylation is found at N30, N35, N46, and N88. LRR repeat units follow at residues 44-69, 70-93, 94-117, 118-141, 143-163, and 164-190; these read STNV…VLQM, YSLL…SFRN, LLNL…SFVG, LNEL…TFVP, NNLK…APQL, and PHLE…NWLN. An LRRCT domain is found at 174–225; sequence NPWNCTCGLLELHNWLNTSNVTLENENMTMCSYPDELKHDSIKSAPFTTECH. N177, N190, N193, N200, N241, N245, and N250 each carry an N-linked (GlcNAc...) asparagine glycan. Residues 265 to 285 form a helical membrane-spanning segment; that stretch reads AFLVGVVATVLLTSLLIFIAI. Topologically, residues 286–364 are cytoplasmic; the sequence is KCPVWYNILL…IDINEVHEEK (79 aa).

Interacts with TRAF2 and TRAF6. As to expression, strongly expressed in kidney, also expressed in spleen, intestine and colon. Highly expressed in epithelial cells. In kidney, mainly expressed in renal collecting duct epithelial cells.

The protein localises to the membrane. Activated by TLR ligands such as LPS, bacterial DNA and peptidoglycan. Functionally, pathogen-recognition receptor which mediates the activation of TRAF2- and TRAF6 NF-kappa-B signaling pathways and induces the expression of pro-inflammatory cytokines. In kidney, prevents infection by uropathogenic bacteria by inducing the production of cytokines, chemokines and antimicrobial substances. In gut, involved in host-microbiota interactions, plays a critical role in promoting the recruitment of immune cells and intestinal inflammation. This chain is Leucine-rich repeat-containing protein 19, found in Mus musculus (Mouse).